Consider the following 585-residue polypeptide: Pre-mRNA-splicing factor sap145 (585 aa).

Residues 1-74 (MAEIQTAQNP…NNDNLYNDKK (74 aa)) adopt a coiled-coil conformation. The disordered stretch occupies residues 1–84 (MAEIQTAQNP…SNGNFYDTNK (84 aa)). The span at 12 to 22 (KELEKILERNN) shows a compositional bias: basic and acidic residues. Residues 23–41 (KQKNKKSRNQVRREKKKLL) show a composition bias toward basic residues. The segment covering 51–62 (LAEKNSDDKDQL) has biased composition (basic and acidic residues). S145 carries the post-translational modification Phosphoserine. Residues 400–460 (IHAGTGSPVS…SASEPRSQRE (61 aa)) are disordered. The segment covering 416 to 439 (LEEFEEEESSEEEESEDVEYPTEE) has biased composition (acidic residues).

Belongs to the 40S cdc5-associated complex (or cwf complex), a spliceosome sub-complex reminiscent of a late-stage spliceosome composed of the U2, U5 and U6 snRNAs and at least brr2, cdc5, cwf2/prp3, cwf3/syf1, cwf4/syf3, cwf5/ecm2, spp42/cwf6, cwf7/spf27, cwf8, cwf9, cwf10, cwf11, cwf12, prp45/cwf13, cwf14, cwf15, cwf16, cwf17, cwf18, cwf19, cwf20, cwf21, cwf22, cwf23, cwf24, cwf25, cwf26, cyp7/cwf27, cwf28, cwf29/ist3, lea1, msl1, prp5/cwf1, prp10/sap155, prp12/sap130, prp17, prp22, sap61, sap62, sap114, sap145, slu7, smb1, smd1, smd3, smf1, smg1 and syf2. Sap145 is part of the SF3b subcomplex of the Prp19-associated nineteen complex (NTC), composed of ini1, prp10, prp12/sap130, sap10/sap155, sap14, sap49 and sap145. Part of the U2 snRNP.

It is found in the nucleus. The protein resides in the cytoplasm. Involved in pre-mRNA splicing. May be involved in endoplasmic reticulum-associated protein degradation (ERAD) and required for growth at low and high temperatures. In Schizosaccharomyces pombe (strain 972 / ATCC 24843) (Fission yeast), this protein is Pre-mRNA-splicing factor sap145 (sap145).